Here is a 752-residue protein sequence, read N- to C-terminus: Photosystem I P700 chlorophyll a apoprotein A1 (752 aa).

A run of 8 helical transmembrane segments spans residues I73–A96, L159–H182, L198–A222, I294–Y312, W349–Y372, L388–V414, A436–H458, and F533–L551. [4Fe-4S] cluster is bound by residues C575 and C584. Helical transmembrane passes span H591 to W612 and L666 to F688. Residue H677 participates in chlorophyll a' binding. Residues M685 and Y693 each coordinate chlorophyll a. Phylloquinone is bound at residue W694. A helical transmembrane segment spans residues A726 to A746.

It belongs to the PsaA/PsaB family. As to quaternary structure, the PsaA/B heterodimer binds the P700 chlorophyll special pair and subsequent electron acceptors. PSI consists of a core antenna complex that captures photons, and an electron transfer chain that converts photonic excitation into a charge separation. The cyanobacterial PSI reaction center is composed of one copy each of PsaA,B,C,D,E,F,I,J,K,L,M and X, and forms trimeric complexes. Requires PSI electron transfer chain: 5 chlorophyll a, 1 chlorophyll a', 2 phylloquinones and 3 4Fe-4S clusters. PSI core antenna: 90 chlorophyll a, 22 carotenoids, 3 phospholipids and 1 galactolipid. P700 is a chlorophyll a/chlorophyll a' dimer, A0 is one or more chlorophyll a, A1 is one or both phylloquinones and FX is a shared 4Fe-4S iron-sulfur center. as cofactor.

It is found in the cellular thylakoid membrane. The catalysed reaction is reduced [plastocyanin] + hnu + oxidized [2Fe-2S]-[ferredoxin] = oxidized [plastocyanin] + reduced [2Fe-2S]-[ferredoxin]. PsaA and PsaB bind P700, the primary electron donor of photosystem I (PSI), as well as the electron acceptors A0, A1 and FX. PSI is a plastocyanin/cytochrome c6-ferredoxin oxidoreductase, converting photonic excitation into a charge separation, which transfers an electron from the donor P700 chlorophyll pair to the spectroscopically characterized acceptors A0, A1, FX, FA and FB in turn. Oxidized P700 is reduced on the lumenal side of the thylakoid membrane by plastocyanin or cytochrome c6. This chain is Photosystem I P700 chlorophyll a apoprotein A1, found in Nostoc punctiforme (strain ATCC 29133 / PCC 73102).